Consider the following 209-residue polypeptide: MDGVTVIDHPLVQHKLTIMRRKETSTGSFRRLLREISTLLCYEVTRDLELTMETIETPLQTMESPILEGKKLVFASILRAGNGLLEGMLDLVPSARVSHIGVYRDHETLQPVEYYFKAPEDVAERLIIVVDPMLATGNSSIAAIDKLKERGAHNIRFLCLLAAPEGIQNFRAAHPDVPVFTASIDSHLNEKGYIVPGLGDAGDRMYGTK.

5-phospho-alpha-D-ribose 1-diphosphate is bound by residues R79, R104, and 131–139; that span reads DPMLATGNS. Uracil-binding positions include I194 and 199–201; that span reads GDA. Residue D200 coordinates 5-phospho-alpha-D-ribose 1-diphosphate.

This sequence belongs to the UPRTase family. Mg(2+) is required as a cofactor.

The enzyme catalyses UMP + diphosphate = 5-phospho-alpha-D-ribose 1-diphosphate + uracil. It functions in the pathway pyrimidine metabolism; UMP biosynthesis via salvage pathway; UMP from uracil: step 1/1. Its activity is regulated as follows. Allosterically activated by GTP. Catalyzes the conversion of uracil and 5-phospho-alpha-D-ribose 1-diphosphate (PRPP) to UMP and diphosphate. The polypeptide is Uracil phosphoribosyltransferase (Rhizobium leguminosarum bv. trifolii (strain WSM2304)).